We begin with the raw amino-acid sequence, 142 residues long: Large ribosomal subunit protein uL13 (142 aa).

This sequence belongs to the universal ribosomal protein uL13 family. Part of the 50S ribosomal subunit.

Its function is as follows. This protein is one of the early assembly proteins of the 50S ribosomal subunit, although it is not seen to bind rRNA by itself. It is important during the early stages of 50S assembly. The protein is Large ribosomal subunit protein uL13 of Vibrio campbellii (strain ATCC BAA-1116).